Reading from the N-terminus, the 634-residue chain is Threonine--tRNA ligase (634 aa).

The TGS domain maps to methionine 1–threonine 61. Residues aspartate 242 to proline 532 are catalytic. Zn(2+)-binding residues include cysteine 333, histidine 384, and histidine 509.

This sequence belongs to the class-II aminoacyl-tRNA synthetase family. As to quaternary structure, homodimer. Zn(2+) serves as cofactor.

The protein resides in the cytoplasm. It carries out the reaction tRNA(Thr) + L-threonine + ATP = L-threonyl-tRNA(Thr) + AMP + diphosphate + H(+). Functionally, catalyzes the attachment of threonine to tRNA(Thr) in a two-step reaction: L-threonine is first activated by ATP to form Thr-AMP and then transferred to the acceptor end of tRNA(Thr). Also edits incorrectly charged L-seryl-tRNA(Thr). The sequence is that of Threonine--tRNA ligase from Carboxydothermus hydrogenoformans (strain ATCC BAA-161 / DSM 6008 / Z-2901).